We begin with the raw amino-acid sequence, 516 residues long: High-affinity nitrate transporter 2.3 (516 aa).

The next 12 membrane-spanning stretches (helical) occupy residues 52–72, 76–96, 112–132, 142–162, 172–192, 209–229, 265–285, 299–319, 335–354, 367–387, 395–415, and 425–445; these read WFSF…LPLI, LGLT…GAVF, LASA…SIIQ, FFTG…SSMF, GVAG…MPLV, IAFF…LAFG, WILA…DNVV, TAGL…PGGG, LWGL…VLGI, VLFS…VPFV, ISGM…YIFF, and GIKY…LIYF. A disordered region spans residues 489–516; that stretch reads SVREGGRSSANGGQPRHTVPVDASPAGV.

The protein belongs to the major facilitator superfamily. Nitrate/nitrite porter (TC 2.A.1.8) family. In terms of assembly, heterotetramer composed of two NRT2.3 and two NAR2.1. Isoform 1 interacts with NAR2.1, but not isoform 2. Expressed in the stelar cells of both primary and lateral roots, particularly at the site of lateral root emergence, root-shoot junction zone, vascular tissues of adventitious root primordia, leaves, germ tips and seed scutellum.

The protein resides in the cell membrane. In terms of biological role, involved in nitrate transport, but does not seem to be able to mediate transport by its own. Acts as a dual component transporter with NAR2.1. Imports nitrate with high affinity when expressed with NAR2.1 in a heterologous system (Xenopus oocytes). Plays a key role in long-distance nitrate transport from root to shoot particularly at low external nitrate supply. The chain is High-affinity nitrate transporter 2.3 (NRT2.3) from Oryza sativa subsp. japonica (Rice).